The primary structure comprises 356 residues: Protein RecA (356 aa).

68–75 (GPESSGKT) contributes to the ATP binding site.

It belongs to the RecA family.

Its subcellular location is the cytoplasm. In terms of biological role, can catalyze the hydrolysis of ATP in the presence of single-stranded DNA, the ATP-dependent uptake of single-stranded DNA by duplex DNA, and the ATP-dependent hybridization of homologous single-stranded DNAs. It interacts with LexA causing its activation and leading to its autocatalytic cleavage. This chain is Protein RecA, found in Clostridium botulinum (strain Eklund 17B / Type B).